The sequence spans 214 residues: Cell division protein SepF (214 aa).

The segment at 24-120 (DNYEEYEERK…NTRRAQESTA (97 aa)) is disordered. Residues 30–40 (EERKAVNEPPR) are compositionally biased toward basic and acidic residues. Residues 55 to 67 (ESYSQPAYTQQSE) show a composition bias toward polar residues. The segment covering 69-98 (VVEKPSARYRSAEAHQERDTQQAAYTEKKV) has biased composition (basic and acidic residues). Polar residues predominate over residues 101–120 (MRSSNQSATTNTRRAQESTA).

Belongs to the SepF family. As to quaternary structure, homodimer. Interacts with FtsZ.

The protein localises to the cytoplasm. In terms of biological role, cell division protein that is part of the divisome complex and is recruited early to the Z-ring. Probably stimulates Z-ring formation, perhaps through the cross-linking of FtsZ protofilaments. Its function overlaps with FtsA. The protein is Cell division protein SepF of Enterococcus faecalis (strain ATCC 700802 / V583).